The primary structure comprises 264 residues: Tritrans,polycis-undecaprenyl-diphosphate synthase (geranylgeranyl-diphosphate specific) (264 aa).

The active site involves Asp-43. A Mg(2+)-binding site is contributed by Asp-43. Residues 44-47, Trp-48, His-60, and 88-90 contribute to the substrate site; these read GNRR and STE. The active-site Proton acceptor is the Asn-91. Substrate contacts are provided by residues Phe-92, Arg-94, Arg-213, and 219 to 221; that span reads RIS. Glu-232 lines the Mg(2+) pocket.

It belongs to the UPP synthase family. Homodimer. Mg(2+) serves as cofactor.

It carries out the reaction geranylgeranyl diphosphate + 7 isopentenyl diphosphate = tri-trans,hepta-cis-undecaprenyl diphosphate + 7 diphosphate. Functionally, catalyzes the sequential condensation of isopentenyl diphosphate (IPP) with geranylgeranyl diphosphate (GGPP) to yield (2Z,6Z,10Z,14Z,18Z,22Z,26Z,30E,34E,38E)-undecaprenyl diphosphate (tritrans,heptacis-UPP). It is probably the precursor of glycosyl carrier lipids. The sequence is that of Tritrans,polycis-undecaprenyl-diphosphate synthase (geranylgeranyl-diphosphate specific) from Pyrococcus furiosus (strain ATCC 43587 / DSM 3638 / JCM 8422 / Vc1).